We begin with the raw amino-acid sequence, 148 residues long: Protoporphyrinogen IX oxidase (148 aa).

4 consecutive transmembrane segments (helical) span residues 7–27, 58–78, 86–106, and 128–148; these read YFLW…AALF, SFIA…MLLI, GGWL…HFYC, and FNEA…VKPF. His-15 is a binding site for heme. Position 92 (Lys-92) interacts with heme.

This sequence belongs to the HemJ family. As to quaternary structure, homodimer. Heme b serves as cofactor.

Its subcellular location is the cell membrane. It carries out the reaction protoporphyrinogen IX + 3 A = protoporphyrin IX + 3 AH2. It participates in porphyrin-containing compound metabolism; protoporphyrin-IX biosynthesis; protoporphyrin-IX from protoporphyrinogen-IX: step 1/1. Its function is as follows. Catalyzes the oxidation of protoporphyrinogen IX to protoporphyrin IX. Is involved in the biosynthesis of tetrapyrrole molecules like heme. Does not use oxygen or artificial electron acceptors such as menadione or benzoquinone. The chain is Protoporphyrinogen IX oxidase from Helicobacter pylori (strain ATCC 700392 / 26695) (Campylobacter pylori).